The following is a 156-amino-acid chain: Endogenous retrovirus group K member 9 Pro protein (156 aa).

Residues 21–96 (FEGLVDTGAD…IPLNLWGRDL (76 aa)) form the Peptidase A2 domain. Residue aspartate 26 is part of the active site. Positions 111–156 (YSPTSQKIMTKRGYIPGKGLGKNEDGIKIPFEAKINQKREGIGYPF) constitute a G-patch domain.

Belongs to the peptidase A2 family. HERV class-II K(HML-2) subfamily. In terms of assembly, active as a homodimer. In terms of processing, autoproteolytically processed at the N-terminus. Expected C-terminal autoprocessing not detected. The sequence shown is that of the processed Pro protein.

The catalysed reaction is Processing at the authentic HIV-1 PR recognition site and release of the mature p17 matrix and the p24 capsid protein, as a result of the cleavage of the -SQNY-|-PIVQ- cleavage site.. In terms of biological role, retroviral proteases have roles in the processing of the primary translation products and the maturation of the viral particle. Endogenous Pro proteins may have kept, lost or modified their original function during evolution. This is Endogenous retrovirus group K member 9 Pro protein (ERVK-9) from Homo sapiens (Human).